The primary structure comprises 321 residues: Leucine-rich repeat-containing protein 46 (321 aa).

LRR repeat units follow at residues E45–Q66, N67–P88, S89–P110, and C111–Q132. The LRRCT domain occupies N142–D184. Residues S175 and S182 each carry the phosphoserine modification. Residues L201 to T221 adopt a coiled-coil conformation. Residues D235–K321 form a disordered region.

It is found in the cell projection. The protein localises to the cilium. It localises to the flagellum. Its function is as follows. Required for normal spermatogenesis and male fertility. Plays an important role in sperm flagellum biogenesis. In Homo sapiens (Human), this protein is Leucine-rich repeat-containing protein 46 (LRRC46).